A 521-amino-acid chain; its full sequence is Ribonuclease Y (521 aa).

Residues 5-25 (MMTMILAVIAAAIGFLIGNLL) form a helical membrane-spanning segment. The region spanning 211–271 (TVSVVALPSD…VRREVAKLSL (61 aa)) is the KH domain. Positions 337–430 (VYQHSLEVAF…VQAADALSGA (94 aa)) constitute an HD domain.

This sequence belongs to the RNase Y family.

It localises to the cell membrane. Its function is as follows. Endoribonuclease that initiates mRNA decay. This Geotalea uraniireducens (strain Rf4) (Geobacter uraniireducens) protein is Ribonuclease Y.